The following is a 151-amino-acid chain: Nucleoside diphosphate kinase (151 aa).

Lys9, Phe57, Arg86, Thr92, Arg103, and Asn113 together coordinate ATP. The active-site Pros-phosphohistidine intermediate is the His116.

This sequence belongs to the NDK family. In terms of assembly, homotetramer. Mg(2+) is required as a cofactor.

The protein localises to the cytoplasm. The catalysed reaction is a 2'-deoxyribonucleoside 5'-diphosphate + ATP = a 2'-deoxyribonucleoside 5'-triphosphate + ADP. It carries out the reaction a ribonucleoside 5'-diphosphate + ATP = a ribonucleoside 5'-triphosphate + ADP. Functionally, major role in the synthesis of nucleoside triphosphates other than ATP. The ATP gamma phosphate is transferred to the NDP beta phosphate via a ping-pong mechanism, using a phosphorylated active-site intermediate. The sequence is that of Nucleoside diphosphate kinase from Chloroflexus aggregans (strain MD-66 / DSM 9485).